The chain runs to 335 residues: Glyceraldehyde-3-phosphate dehydrogenase 2 (335 aa).

NAD(+) is bound by residues 12 to 13 (RI), Asp35, Arg79, and Ser121. D-glyceraldehyde 3-phosphate contacts are provided by residues 152 to 154 (SCT) and Thr183. The Nucleophile role is filled by Cys153. Residue Asn184 participates in NAD(+) binding. Residues Arg198, 211 to 212 (TG), and Arg234 contribute to the D-glyceraldehyde 3-phosphate site. Asn316 lines the NAD(+) pocket.

Belongs to the glyceraldehyde-3-phosphate dehydrogenase family. In terms of assembly, homotetramer.

It localises to the cytoplasm. It catalyses the reaction D-glyceraldehyde 3-phosphate + phosphate + NAD(+) = (2R)-3-phospho-glyceroyl phosphate + NADH + H(+). Its pathway is carbohydrate degradation; glycolysis; pyruvate from D-glyceraldehyde 3-phosphate: step 1/5. With respect to regulation, inhibited by pentalenolactone. Functionally, catalyzes the oxidative phosphorylation of glyceraldehyde 3-phosphate (G3P) to 1,3-bisphosphoglycerate (BPG) using the cofactor NAD. The first reaction step involves the formation of a hemiacetal intermediate between G3P and a cysteine residue, and this hemiacetal intermediate is then oxidized to a thioester, with concomitant reduction of NAD to NADH. The reduced NADH is then exchanged with the second NAD, and the thioester is attacked by a nucleophilic inorganic phosphate to produce BPG. The sequence is that of Glyceraldehyde-3-phosphate dehydrogenase 2 (gap2) from Streptomyces avermitilis (strain ATCC 31267 / DSM 46492 / JCM 5070 / NBRC 14893 / NCIMB 12804 / NRRL 8165 / MA-4680).